We begin with the raw amino-acid sequence, 311 residues long: Protein N-terminal asparagine amidohydrolase (311 aa).

Monomer.

The protein localises to the cytoplasm. It carries out the reaction N-terminal L-asparaginyl-[protein] + H2O + H(+) = N-terminal L-aspartyl-[protein] + NH4(+). In terms of biological role, N-terminal asparagine deamidase that mediates deamidation of N-terminal asparagine residues to aspartate. Required for the ubiquitin-dependent turnover of intracellular proteins that initiate with Met-Asn. These proteins are acetylated on the retained initiator methionine and can subsequently be modified by the removal of N-acetyl methionine by acylaminoacid hydrolase (AAH). Conversion of the resulting N-terminal asparagine to aspartate by NTAN1/PNAD renders the protein susceptible to arginylation, polyubiquitination and degradation as specified by the N-end rule. This enzyme does not act on substrates with internal or C-terminal asparagines and does not act on glutamine residues in any position. In Sus scrofa (Pig), this protein is Protein N-terminal asparagine amidohydrolase (NTAN1).